The primary structure comprises 273 residues: Ribosomal protein L11 methyltransferase (273 aa).

S-adenosyl-L-methionine-binding residues include Thr-112, Gly-133, Asp-155, and Asn-203.

This sequence belongs to the methyltransferase superfamily. PrmA family.

It is found in the cytoplasm. The catalysed reaction is L-lysyl-[protein] + 3 S-adenosyl-L-methionine = N(6),N(6),N(6)-trimethyl-L-lysyl-[protein] + 3 S-adenosyl-L-homocysteine + 3 H(+). Methylates ribosomal protein L11. The sequence is that of Ribosomal protein L11 methyltransferase from Deinococcus radiodurans (strain ATCC 13939 / DSM 20539 / JCM 16871 / CCUG 27074 / LMG 4051 / NBRC 15346 / NCIMB 9279 / VKM B-1422 / R1).